Reading from the N-terminus, the 335-residue chain is Large ribosomal subunit protein uL10 (335 aa).

The segment at 304 to 335 (GAAAPVEEAPVEEKKEEKKEEAAPAAGLGMLF) is disordered. The span at 314-325 (VEEKKEEKKEEA) shows a compositional bias: basic and acidic residues.

It belongs to the universal ribosomal protein uL10 family. In terms of assembly, part of the 50S ribosomal subunit. Forms part of the ribosomal stalk which helps the ribosome interact with GTP-bound translation factors. Forms a heptameric L10(L12)2(L12)2(L12)2 complex, where L10 forms an elongated spine to which the L12 dimers bind in a sequential fashion.

Forms part of the ribosomal stalk, playing a central role in the interaction of the ribosome with GTP-bound translation factors. The sequence is that of Large ribosomal subunit protein uL10 from Methanococcus maripaludis (strain C6 / ATCC BAA-1332).